Here is an 85-residue protein sequence, read N- to C-terminus: Putative defensin-like protein 142 (85 aa).

An N-terminal signal peptide occupies residues 1–24; sequence MKKSFLFTFTVLTIFTILVIGVAP. Cystine bridges form between cysteine 30–cysteine 78, cysteine 41–cysteine 63, cysteine 46–cysteine 73, and cysteine 50–cysteine 75.

It belongs to the DEFL family.

The protein localises to the secreted. This is Putative defensin-like protein 142 (LCR34) from Arabidopsis thaliana (Mouse-ear cress).